Reading from the N-terminus, the 273-residue chain is Formamidopyrimidine-DNA glycosylase (273 aa).

The active-site Schiff-base intermediate with DNA is the Pro-2. The Proton donor role is filled by Glu-3. Lys-59 functions as the Proton donor; for beta-elimination activity in the catalytic mechanism. His-92 and Arg-111 together coordinate DNA. The segment at 239 to 273 adopts an FPG-type zinc-finger fold; sequence KVYGKTGEPCVICGTPIEKIKLNGRGTHFCPHCQK. Arg-263 functions as the Proton donor; for delta-elimination activity in the catalytic mechanism.

This sequence belongs to the FPG family. As to quaternary structure, monomer. It depends on Zn(2+) as a cofactor.

It catalyses the reaction Hydrolysis of DNA containing ring-opened 7-methylguanine residues, releasing 2,6-diamino-4-hydroxy-5-(N-methyl)formamidopyrimidine.. The enzyme catalyses 2'-deoxyribonucleotide-(2'-deoxyribose 5'-phosphate)-2'-deoxyribonucleotide-DNA = a 3'-end 2'-deoxyribonucleotide-(2,3-dehydro-2,3-deoxyribose 5'-phosphate)-DNA + a 5'-end 5'-phospho-2'-deoxyribonucleoside-DNA + H(+). Functionally, involved in base excision repair of DNA damaged by oxidation or by mutagenic agents. Acts as a DNA glycosylase that recognizes and removes damaged bases. Has a preference for oxidized purines, such as 7,8-dihydro-8-oxoguanine (8-oxoG). Has AP (apurinic/apyrimidinic) lyase activity and introduces nicks in the DNA strand. Cleaves the DNA backbone by beta-delta elimination to generate a single-strand break at the site of the removed base with both 3'- and 5'-phosphates. This chain is Formamidopyrimidine-DNA glycosylase, found in Listeria innocua serovar 6a (strain ATCC BAA-680 / CLIP 11262).